Here is a 415-residue protein sequence, read N- to C-terminus: Serine hydroxymethyltransferase (415 aa).

Residues Leu-117 and 121–123 contribute to the (6S)-5,6,7,8-tetrahydrofolate site; that span reads GHL. Lys-226 carries the N6-(pyridoxal phosphate)lysine modification.

The protein belongs to the SHMT family. Homodimer. Pyridoxal 5'-phosphate is required as a cofactor.

It localises to the cytoplasm. The enzyme catalyses (6R)-5,10-methylene-5,6,7,8-tetrahydrofolate + glycine + H2O = (6S)-5,6,7,8-tetrahydrofolate + L-serine. Its pathway is one-carbon metabolism; tetrahydrofolate interconversion. The protein operates within amino-acid biosynthesis; glycine biosynthesis; glycine from L-serine: step 1/1. Functionally, catalyzes the reversible interconversion of serine and glycine with tetrahydrofolate (THF) serving as the one-carbon carrier. This reaction serves as the major source of one-carbon groups required for the biosynthesis of purines, thymidylate, methionine, and other important biomolecules. Also exhibits THF-independent aldolase activity toward beta-hydroxyamino acids, producing glycine and aldehydes, via a retro-aldol mechanism. The polypeptide is Serine hydroxymethyltransferase (Leptospira borgpetersenii serovar Hardjo-bovis (strain JB197)).